A 147-amino-acid polypeptide reads, in one-letter code: MALKRINRELADLGKDPPSSCSAGPVGDDLFHWQATIMGPADSPYAGGVFFLSIHFPTDYPFKPPKVNFTTRIYHPNINSNGSICLDILRDQWSPALTISKVLLSICSLLTDPNPDDPLVPEIAHVYKTDRSRYELSAREWTRKYAI.

The 147-residue stretch at 1-147 (MALKRINREL…AREWTRKYAI (147 aa)) folds into the UBC core domain. The Glycyl thioester intermediate role is filled by cysteine 85.

Belongs to the ubiquitin-conjugating enzyme family. Interacts with the E1 ubiquitin-activating enzyme ptr3 and E3 ubiquitin-protein ligase pub2.

The catalysed reaction is S-ubiquitinyl-[E1 ubiquitin-activating enzyme]-L-cysteine + [E2 ubiquitin-conjugating enzyme]-L-cysteine = [E1 ubiquitin-activating enzyme]-L-cysteine + S-ubiquitinyl-[E2 ubiquitin-conjugating enzyme]-L-cysteine.. The protein operates within protein modification; protein ubiquitination. E2 ubiquitin-conjugating enzyme that catalyzes the covalent attachment of ubiquitin to other proteins. Mediates the selective degradation of short-lived and abnormal proteins. Mediates ubiquitination of pex5. This Schizosaccharomyces pombe (strain 972 / ATCC 24843) (Fission yeast) protein is Ubiquitin-conjugating enzyme E2 4 (ubc4).